Reading from the N-terminus, the 72-residue chain is Variant surface glycoprotein MITAT 1.1000BC (72 aa).

Residue Asp-50 is the site of GPI-anchor amidated aspartate attachment. Residues 51–72 (GSFLVNKKFALMVYDFVSLLAF) constitute a propeptide, removed in mature form.

The protein resides in the cell membrane. Functionally, VSG forms a coat on the surface of the parasite. The trypanosome evades the immune response of the host by expressing a series of antigenically distinct VSGs from an estimated 1000 VSG genes. In Trypanosoma brucei brucei, this protein is Variant surface glycoprotein MITAT 1.1000BC.